We begin with the raw amino-acid sequence, 291 residues long: Pirin-like protein (291 aa).

The protein belongs to the pirin family.

Its subcellular location is the nucleus. The chain is Pirin-like protein from Solanum lycopersicum (Tomato).